Consider the following 338-residue polypeptide: Ketol-acid reductoisomerase (NADP(+)) (338 aa).

One can recognise a KARI N-terminal Rossmann domain in the interval 1-181 (MKVYYDKDAD…GGTKGGVIET (181 aa)). NADP(+) contacts are provided by residues 24–27 (YGSQ), Arg47, Ser52, and 82–85 (DETQ). His107 is an active-site residue. Residue Gly133 coordinates NADP(+). A KARI C-terminal knotted domain is found at 182-327 (SFREETETDL…AELRAMMPWI (146 aa)). 4 residues coordinate Mg(2+): Asp190, Glu194, Glu226, and Glu230. Ser251 lines the substrate pocket.

The protein belongs to the ketol-acid reductoisomerase family. Mg(2+) serves as cofactor.

It catalyses the reaction (2R)-2,3-dihydroxy-3-methylbutanoate + NADP(+) = (2S)-2-acetolactate + NADPH + H(+). The enzyme catalyses (2R,3R)-2,3-dihydroxy-3-methylpentanoate + NADP(+) = (S)-2-ethyl-2-hydroxy-3-oxobutanoate + NADPH + H(+). It participates in amino-acid biosynthesis; L-isoleucine biosynthesis; L-isoleucine from 2-oxobutanoate: step 2/4. The protein operates within amino-acid biosynthesis; L-valine biosynthesis; L-valine from pyruvate: step 2/4. Involved in the biosynthesis of branched-chain amino acids (BCAA). Catalyzes an alkyl-migration followed by a ketol-acid reduction of (S)-2-acetolactate (S2AL) to yield (R)-2,3-dihydroxy-isovalerate. In the isomerase reaction, S2AL is rearranged via a Mg-dependent methyl migration to produce 3-hydroxy-3-methyl-2-ketobutyrate (HMKB). In the reductase reaction, this 2-ketoacid undergoes a metal-dependent reduction by NADPH to yield (R)-2,3-dihydroxy-isovalerate. The sequence is that of Ketol-acid reductoisomerase (NADP(+)) from Laribacter hongkongensis (strain HLHK9).